The sequence spans 147 residues: MVNLSGDEKNAVHGLWSKVKVDEVGGEALGRLLVVYPWTRRFFESFGDLSTADAVMNNPKVKAHGSKVLNSFGDGLSHLDNLKGTYAKLSELHCDKLHVDPENFRLLGNVLVVVLARHFGKEFTPDLQAAYQKVVAGVANALAHRYH.

Residue Val2 is modified to N-acetylvaline. A Globin domain is found at 3-147 (NLSGDEKNAV…VANALAHRYH (145 aa)). Ser45 carries the phosphoserine modification. Lys60 is modified (N6-acetyllysine). Residue His64 coordinates heme b. Lys83 is modified (N6-acetyllysine). His93 is a binding site for heme b. Position 94 is an S-nitrosocysteine (Cys94).

This sequence belongs to the globin family. In terms of assembly, heterotetramer of two alpha chains and two beta chains. Red blood cells.

In terms of biological role, involved in oxygen transport from the lung to the various peripheral tissues. The protein is Hemoglobin subunit beta (HBB) of Vicugna pacos (Alpaca).